Here is a 142-residue protein sequence, read N- to C-terminus: Large ribosomal subunit protein uL11 (142 aa).

Belongs to the universal ribosomal protein uL11 family. In terms of assembly, part of the ribosomal stalk of the 50S ribosomal subunit. Interacts with L10 and the large rRNA to form the base of the stalk. L10 forms an elongated spine to which L12 dimers bind in a sequential fashion forming a multimeric L10(L12)X complex. In terms of processing, one or more lysine residues are methylated.

Its function is as follows. Forms part of the ribosomal stalk which helps the ribosome interact with GTP-bound translation factors. The chain is Large ribosomal subunit protein uL11 from Acidithiobacillus ferrooxidans (strain ATCC 23270 / DSM 14882 / CIP 104768 / NCIMB 8455) (Ferrobacillus ferrooxidans (strain ATCC 23270)).